A 313-amino-acid polypeptide reads, in one-letter code: Olfactory receptor 10G3 (313 aa).

The Extracellular segment spans residues 1 to 25 (MERINSTLLTAFILTGIPYPLRLRT). A glycan (N-linked (GlcNAc...) asparagine) is linked at Asn5. A helical membrane pass occupies residues 26-46 (LFFVFFFLIYILTQLGNLLIL). Topologically, residues 47-54 (ITVWADPR) are cytoplasmic. A helical membrane pass occupies residues 55 to 76 (LHARPMYIFLGVLSVIDMSISS). The Extracellular portion of the chain corresponds to 77–100 (IIVPRLMMNFTLGVKPIPFGGCVA). Asn85 is a glycosylation site (N-linked (GlcNAc...) asparagine). A disulfide bridge connects residues Cys98 and Cys190. Residues 101–121 (QLYFYHFLGSTQCFLYTLMAY) form a helical membrane-spanning segment. Residues 122-140 (DRYLAICQPLRYPVLMTAK) lie on the Cytoplasmic side of the membrane. The helical transmembrane segment at 141-161 (LSALLVAGAWMAGSIHGALQA) threads the bilayer. Over 162 to 198 (ILTFRLPYCGPNQVDYFFCDIPAVLRLACADTTVNEL) the chain is Extracellular. Residues 199–218 (VTFVDIGVVVASCFSLILLS) form a helical membrane-spanning segment. Residues 219–238 (YIQIIQAILRIHTADGRRRA) lie on the Cytoplasmic side of the membrane. The helical transmembrane segment at 239 to 259 (FSTCGAHVTVVTVYYVPCAFI) threads the bilayer. Topologically, residues 260–270 (YLRPETNSPLD) are extracellular. A helical membrane pass occupies residues 271–291 (GAAALVPTAITPFLNPLIYTL). Residues 292–313 (RNQEVKLALKRMLRSPRTPSEV) are Cytoplasmic-facing.

It belongs to the G-protein coupled receptor 1 family.

Its subcellular location is the cell membrane. In terms of biological role, odorant receptor. This chain is Olfactory receptor 10G3 (OR10G3), found in Homo sapiens (Human).